Reading from the N-terminus, the 1059-residue chain is IQ motif-containing protein H (1059 aa).

Residues 6 to 35 (KNKDEVGNILVKVQDDLRQLKKNIVQFTVQ) adopt a coiled-coil conformation. The interval 245–267 (MESAESRLLRAPPPSAASASSDN) is disordered. Residues 401–430 (HQAAAVRIQTCWRRYSARTAYLIRLRSKWA) enclose the IQ domain.

The protein is IQ motif-containing protein H (iqch) of Danio rerio (Zebrafish).